The primary structure comprises 189 residues: Acireductone dioxygenase 1 (189 aa).

Fe(2+) contacts are provided by histidine 102, histidine 104, glutamate 108, and histidine 146. The Ni(2+) site is built by histidine 102, histidine 104, glutamate 108, and histidine 146.

The protein belongs to the acireductone dioxygenase (ARD) family. In terms of assembly, monomer. The cofactor is Fe(2+). It depends on Ni(2+) as a cofactor.

It catalyses the reaction 1,2-dihydroxy-5-(methylsulfanyl)pent-1-en-3-one + O2 = 3-(methylsulfanyl)propanoate + CO + formate + 2 H(+). It carries out the reaction 1,2-dihydroxy-5-(methylsulfanyl)pent-1-en-3-one + O2 = 4-methylsulfanyl-2-oxobutanoate + formate + 2 H(+). The protein operates within amino-acid biosynthesis; L-methionine biosynthesis via salvage pathway; L-methionine from S-methyl-5-thio-alpha-D-ribose 1-phosphate: step 5/6. Functionally, catalyzes 2 different reactions between oxygen and the acireductone 1,2-dihydroxy-3-keto-5-methylthiopentene (DHK-MTPene) depending upon the metal bound in the active site. Fe-containing acireductone dioxygenase (Fe-ARD) produces formate and 2-keto-4-methylthiobutyrate (KMTB), the alpha-ketoacid precursor of methionine in the methionine recycle pathway. Ni-containing acireductone dioxygenase (Ni-ARD) produces methylthiopropionate, carbon monoxide and formate, and does not lie on the methionine recycle pathway. The chain is Acireductone dioxygenase 1 from Nocardia farcinica (strain IFM 10152).